Consider the following 95-residue polypeptide: Integration host factor subunit beta (95 aa).

The protein belongs to the bacterial histone-like protein family. Heterodimer of an alpha and a beta chain.

This protein is one of the two subunits of integration host factor, a specific DNA-binding protein that functions in genetic recombination as well as in transcriptional and translational control. The chain is Integration host factor subunit beta from Shewanella sp. (strain ANA-3).